The sequence spans 428 residues: Probable methanogen homoaconitase large subunit (428 aa).

[4Fe-4S] cluster is bound by residues Cys-304, Cys-364, and Cys-367.

Belongs to the aconitase/IPM isomerase family. LeuC type 2 subfamily. Heterotetramer of 2 HacA and 2 HacB proteins.

The enzyme catalyses (2R)-homocitrate = (2R,3S)-homoisocitrate. It carries out the reaction (2R)-homocitrate = cis-homoaconitate + H2O. The catalysed reaction is (2R,3S)-homoisocitrate = cis-homoaconitate + H2O. It catalyses the reaction cis-(homo)2aconitate + H2O = (2R,3S)-iso(homo)2citrate. The enzyme catalyses cis-(homo)3aconitate + H2O = (2R,3S)-iso(homo)3citrate. It functions in the pathway organic acid metabolism; 2-oxosuberate biosynthesis. Component of a hydro-lyase with broad substrate specificity for cis-unsaturated tricarboxylic acids. Catalyzes both the reversible dehydration of (R)-homocitrate ((R)-2-hydroxybutane-1,2,4-tricarboxylate) to produce cis-homoaconitate ((Z)-but-1-ene-1,2,4-tricarboxylate), and its hydration to homoisocitrate ((1R,2S)-1-hydroxybutane-1,2,4-tricarboxylate). Is also able to hydrate the analogous longer chain substrates cis-homo(2)-aconitate, cis-homo(3)-aconitate. These reactions are part of the biosynthesis pathway of coenzyme B. In Methanothermobacter thermautotrophicus (strain ATCC 29096 / DSM 1053 / JCM 10044 / NBRC 100330 / Delta H) (Methanobacterium thermoautotrophicum), this protein is Probable methanogen homoaconitase large subunit (hacA).